The sequence spans 108 residues: Parvalbumin beta 1 (108 aa).

Ala-1 carries the post-translational modification N-acetylalanine. EF-hand domains lie at 38-73 (KXXD…FCPK) and 77-108 (LTDA…LVKQ). Asp-51, Asp-53, Ser-55, Phe-57, Glu-59, Glu-62, Asp-90, Asp-92, Asp-94, Met-96, and Glu-101 together coordinate Ca(2+).

It belongs to the parvalbumin family.

In muscle, parvalbumin is thought to be involved in relaxation after contraction. It binds two calcium ions. This is Parvalbumin beta 1 from Oncorhynchus mykiss (Rainbow trout).